The chain runs to 122 residues: 5'-AMP-activated protein kinase subunit beta-1 (122 aa).

Residues serine 5, serine 61, serine 66, and serine 73 each carry the phosphoserine modification. Positions 33–122 are glycogen-binding domain; the sequence is EVNDKASAQA…TVNNIIQVKK (90 aa). A Phosphothreonine modification is found at threonine 113.

This sequence belongs to the 5'-AMP-activated protein kinase beta subunit family. In terms of assembly, AMPK is a heterotrimer of an alpha catalytic subunit (PRKAA1 or PRKAA2), a beta (PRKAB1 or PRKAB2) and a gamma non-catalytic subunits (PRKAG1, PRKAG2 or PRKAG3). Interacts with FNIP1 and FNIP2. In terms of processing, phosphorylated when associated with the catalytic subunit (PRKAA1 or PRKAA2). Phosphorylated by ULK1; leading to negatively regulate AMPK activity and suggesting the existence of a regulatory feedback loop between ULK1 and AMPK.

Functionally, non-catalytic subunit of AMP-activated protein kinase (AMPK), an energy sensor protein kinase that plays a key role in regulating cellular energy metabolism. In response to reduction of intracellular ATP levels, AMPK activates energy-producing pathways and inhibits energy-consuming processes: inhibits protein, carbohydrate and lipid biosynthesis, as well as cell growth and proliferation. AMPK acts via direct phosphorylation of metabolic enzymes, and by longer-term effects via phosphorylation of transcription regulators. Also acts as a regulator of cellular polarity by remodeling the actin cytoskeleton; probably by indirectly activating myosin. Beta non-catalytic subunit acts as a scaffold on which the AMPK complex assembles, via its C-terminus that bridges alpha (PRKAA1 or PRKAA2) and gamma subunits (PRKAG1, PRKAG2 or PRKAG3). In Sus scrofa (Pig), this protein is 5'-AMP-activated protein kinase subunit beta-1 (PRKAB1).